We begin with the raw amino-acid sequence, 248 residues long: ATP synthase subunit a, chloroplastic (248 aa).

5 consecutive transmembrane segments (helical) span residues 38–58 (QVLI…TIAV), 96–116 (VPFI…GALL), 135–155 (INTT…AGLA), 200–220 (LVVA…VMFL), and 221–241 (GLFT…AYIG).

It belongs to the ATPase A chain family. In terms of assembly, F-type ATPases have 2 components, CF(1) - the catalytic core - and CF(0) - the membrane proton channel. CF(1) has five subunits: alpha(3), beta(3), gamma(1), delta(1), epsilon(1). CF(0) has four main subunits: a, b, b' and c.

The protein localises to the plastid. The protein resides in the chloroplast thylakoid membrane. Key component of the proton channel; it plays a direct role in the translocation of protons across the membrane. In Pinus koraiensis (Korean pine), this protein is ATP synthase subunit a, chloroplastic.